We begin with the raw amino-acid sequence, 469 residues long: Glutamate--tRNA ligase 2 (469 aa).

The 'HIGH' region motif lies at 8-18; that stretch reads PSPTGFLHVGG. Positions 250 to 254 match the 'KMSKS' region motif; that stretch reads KLSKR. Lysine 253 contributes to the ATP binding site.

It belongs to the class-I aminoacyl-tRNA synthetase family. Glutamate--tRNA ligase type 1 subfamily. In terms of assembly, monomer.

The protein localises to the cytoplasm. It catalyses the reaction tRNA(Glu) + L-glutamate + ATP = L-glutamyl-tRNA(Glu) + AMP + diphosphate. In terms of biological role, catalyzes the attachment of glutamate to tRNA(Glu) in a two-step reaction: glutamate is first activated by ATP to form Glu-AMP and then transferred to the acceptor end of tRNA(Glu). The protein is Glutamate--tRNA ligase 2 of Thermotoga petrophila (strain ATCC BAA-488 / DSM 13995 / JCM 10881 / RKU-1).